We begin with the raw amino-acid sequence, 505 residues long: Probable alpha-L-arabinofuranosidase C (505 aa).

N-linked (GlcNAc...) asparagine glycosylation is found at N152, N181, and N269.

The protein belongs to the glycosyl hydrolase 51 family.

The protein resides in the secreted. It catalyses the reaction Hydrolysis of terminal non-reducing alpha-L-arabinofuranoside residues in alpha-L-arabinosides.. It participates in glycan metabolism; L-arabinan degradation. Alpha-L-arabinofuranosidase involved in the degradation of arabinoxylan, a major component of plant hemicellulose. Acts only on small linear 1,5-alpha-linked L-arabinofuranosyl oligosaccharides. The chain is Probable alpha-L-arabinofuranosidase C (abfC) from Aspergillus niger (strain ATCC MYA-4892 / CBS 513.88 / FGSC A1513).